Here is a 542-residue protein sequence, read N- to C-terminus: Apolipoprotein N-acyltransferase (542 aa).

6 helical membrane-spanning segments follow: residues 24–44, 54–74, 85–105, 116–136, 160–180, and 190–210; these read VVAS…GLFA, VWCI…SWML, FVWG…SCLV, ALVW…YGLL, FFGW…CFAV, and GLWL…YEYL. The CN hydrolase domain maps to 220 to 499; the sequence is LRVAIVQPGY…TGVLQVSVPL (280 aa). Glu-264 serves as the catalytic Proton acceptor. Lys-349 is a catalytic residue. The active-site Nucleophile is Cys-404. The helical transmembrane segment at 509-529 threads the bilayer; that stretch reads LGDAPLLLIAVCSVIGAIAYF.

The protein belongs to the CN hydrolase family. Apolipoprotein N-acyltransferase subfamily.

The protein localises to the cell inner membrane. The catalysed reaction is N-terminal S-1,2-diacyl-sn-glyceryl-L-cysteinyl-[lipoprotein] + a glycerophospholipid = N-acyl-S-1,2-diacyl-sn-glyceryl-L-cysteinyl-[lipoprotein] + a 2-acyl-sn-glycero-3-phospholipid + H(+). It functions in the pathway protein modification; lipoprotein biosynthesis (N-acyl transfer). Functionally, catalyzes the phospholipid dependent N-acylation of the N-terminal cysteine of apolipoprotein, the last step in lipoprotein maturation. The protein is Apolipoprotein N-acyltransferase of Chlamydia trachomatis serovar D (strain ATCC VR-885 / DSM 19411 / UW-3/Cx).